Consider the following 109-residue polypeptide: Fluoride-specific ion channel FluC 1 (109 aa).

3 helical membrane passes run 21-41, 52-72, and 84-104; these read LFINNNFIVSIIGSLLFGFFI, IILSGFFSCFTSFSGFIYFLY, and IIFCNLIIIINLLVMYFGFWI.

It belongs to the fluoride channel Fluc/FEX (TC 1.A.43) family.

It localises to the cell inner membrane. The catalysed reaction is fluoride(in) = fluoride(out). In terms of biological role, fluoride-specific ion channel. Important for reducing fluoride concentration in the cell, thus reducing its toxicity. The polypeptide is Fluoride-specific ion channel FluC 1 (Prochlorococcus marinus (strain MIT 9312)).